A 193-amino-acid chain; its full sequence is Ribonuclease HII (193 aa).

An RNase H type-2 domain is found at 15–193 (YIVAGVDEAG…SYHRKSFKFC (179 aa)). Residues Asp21, Glu22, and Asp112 each contribute to the a divalent metal cation site.

This sequence belongs to the RNase HII family. The cofactor is Mn(2+). Mg(2+) is required as a cofactor.

Its subcellular location is the cytoplasm. The enzyme catalyses Endonucleolytic cleavage to 5'-phosphomonoester.. Its function is as follows. Endonuclease that specifically degrades the RNA of RNA-DNA hybrids. This Rickettsia typhi (strain ATCC VR-144 / Wilmington) protein is Ribonuclease HII.